The sequence spans 2156 residues: Oxygen-regulated protein 1 (2156 aa).

Over residues 1-19 (MSDTPSTGFSIIHPTSSEG) the composition is skewed to polar residues. Positions 1 to 25 (MSDTPSTGFSIIHPTSSEGQVPPPR) are disordered. Doublecortin domains lie at 36-118 (KRIS…VDLD) and 154-233 (RSLV…GNYD). 4 disordered regions span residues 353-375 (VSKTGPSNNDEKSEMSFPGRTES), 666-686 (SSVASKKKKKSRQQAINSRYQ), 1438-1458 (DMEEPRTSEEPGSITNSMTSS), and 1590-1621 (DWSDYRPDSDSEQPYKTSSDDPNDSGELTQEK).

In terms of assembly, interacts (via the doublecortin domains) with microtubules. Interacts with RP1L1. Interacts with MAK. Expressed in retina. Not expressed in heart, brain, placenta, lung, liver, skeletal muscle, kidney, spleen and pancreas.

It localises to the cytoplasm. Its subcellular location is the cytoskeleton. The protein localises to the cilium axoneme. It is found in the cell projection. The protein resides in the cilium. It localises to the photoreceptor outer segment. In terms of biological role, microtubule-associated protein regulating the stability and length of the microtubule-based axoneme of photoreceptors. Required for the differentiation of photoreceptor cells, it plays a role in the organization of the outer segment of rod and cone photoreceptors ensuring the correct orientation and higher-order stacking of outer segment disks along the photoreceptor axoneme. In Homo sapiens (Human), this protein is Oxygen-regulated protein 1 (RP1).